A 985-amino-acid polypeptide reads, in one-letter code: DNA polymerase (985 aa).

The segment at 936–972 is disordered; the sequence is APSASDASGKRARKGAAPSDDESGSSEDEDAPCEPKC. Positions 954-967 are enriched in acidic residues; that stretch reads SDDESGSSEDEDAP.

It belongs to the DNA polymerase type-B family.

The catalysed reaction is DNA(n) + a 2'-deoxyribonucleoside 5'-triphosphate = DNA(n+1) + diphosphate. Functionally, replicates the viral genome, host DNA polymerases cannot substitute for the viral enzyme in this process. The chain is DNA polymerase (POL) from Orgyia pseudotsugata (Douglas-fir tussock moth).